A 314-amino-acid polypeptide reads, in one-letter code: Homoserine O-succinyltransferase (314 aa).

Cys-142 (acyl-thioester intermediate) is an active-site residue. Residues Lys-163 and Ser-192 each contribute to the substrate site. The active-site Proton acceptor is the His-235. The active site involves Glu-237. Arg-249 is a substrate binding site.

This sequence belongs to the MetA family.

It is found in the cytoplasm. It carries out the reaction L-homoserine + succinyl-CoA = O-succinyl-L-homoserine + CoA. Its pathway is amino-acid biosynthesis; L-methionine biosynthesis via de novo pathway; O-succinyl-L-homoserine from L-homoserine: step 1/1. Functionally, transfers a succinyl group from succinyl-CoA to L-homoserine, forming succinyl-L-homoserine. The chain is Homoserine O-succinyltransferase from Shewanella woodyi (strain ATCC 51908 / MS32).